The chain runs to 255 residues: Electron transfer flavoprotein beta subunit lysine methyltransferase (255 aa).

The transit peptide at 1–32 (MAFSLCWKAPRSQWSFLQALNSGFPLFPWRTV) directs the protein to the mitochondrion.

Belongs to the methyltransferase superfamily. ETFBKMT family. In terms of assembly, interacts with HSPD1; this protein may possibly be a methylation substrate.

It localises to the cytoplasm. It is found in the mitochondrion matrix. It carries out the reaction L-lysyl-[protein] + 3 S-adenosyl-L-methionine = N(6),N(6),N(6)-trimethyl-L-lysyl-[protein] + 3 S-adenosyl-L-homocysteine + 3 H(+). Functionally, protein-lysine methyltransferase that selectively trimethylates the flavoprotein ETFB in mitochondria. Thereby, may negatively regulate the function of ETFB in electron transfer from Acyl-CoA dehydrogenases to the main respiratory chain. This is Electron transfer flavoprotein beta subunit lysine methyltransferase from Rattus norvegicus (Rat).